A 424-amino-acid chain; its full sequence is uncharacterized protein (424 aa).

The next 11 membrane-spanning stretches (helical) occupy residues 9–29, 41–61, 86–106, 119–139, 148–168, 184–204, 222–242, 270–290, 320–340, 345–365, and 377–397; these read ITWI…GILI, ASLF…GTLA, GAIL…IIAL, ADWQ…LLHM, ISTL…AVSL, WSAA…WEMI, LFLA…VTVG, VTVC…IAGF, VLTA…LFQI, LLKG…AAAL, and MALG…WALL.

Belongs to the amino acid-polyamine-organocation (APC) superfamily.

The protein localises to the cell membrane. This is an uncharacterized protein from Bacillus subtilis (strain 168).